The following is a 199-amino-acid chain: Putative peroxiredoxin ycf42 (199 aa).

Positions 8-165 (LQVGQIAPDF…TLRVLQAIQY (158 aa)) constitute a Thioredoxin domain. Residue cysteine 53 is the Cysteine sulfenic acid (-SOH) intermediate of the active site.

The protein belongs to the peroxiredoxin family. AhpC/Prx1 subfamily. In terms of assembly, homodimer; disulfide-linked, upon oxidation. In terms of processing, the Cys-53-SH group is the primary site of oxidation by H(2)O(2), and the oxidized Cys-53 (probably Cys-SOH) rapidly reacts with Cys-174-SH of the other subunit to form an intermolecular disulfide. This disulfide is subsequently reduced by thioredoxin.

The protein resides in the plastid. It localises to the chloroplast. It carries out the reaction a hydroperoxide + [thioredoxin]-dithiol = an alcohol + [thioredoxin]-disulfide + H2O. Functionally, thiol-specific peroxidase that catalyzes the reduction of hydrogen peroxide and organic hydroperoxides to water and alcohols, respectively. Plays a role in cell protection against oxidative stress by detoxifying peroxides. This chain is Putative peroxiredoxin ycf42 (ycf42), found in Porphyra purpurea (Red seaweed).